Consider the following 270-residue polypeptide: Protein-ADP-ribose hydrolase (270 aa).

The Macro domain maps to 73-267; it reads VSVKDCQKTN…LYDTYLQKEN (195 aa). Residues Asp92, Ile93, and Asn106 each contribute to the ADP-D-ribose site. Residues Cys112, His117, and Cys119 each contribute to the Zn(2+) site. The ADP-D-ribose site is built by Cys119, Ile120, Asp121, Ser212, Thr213, Gly214, Glu215, and Phe216.

This sequence belongs to the MacroD-type family. Zn-Macro subfamily. Requires Zn(2+) as cofactor.

It catalyses the reaction 4-O-(ADP-D-ribosyl)-L-aspartyl-[protein] + H2O = L-aspartyl-[protein] + ADP-D-ribose + H(+). Its function is as follows. ADP-ribosylhydrolase that specifically reverses the SirTM-mediated mono-ADP-ribosylation at an asparatate residue of GcvH-L, by releasing ADP-ribose from the target protein. May play a role in the regulation of the response to host-induced oxidative stress. The protein is Protein-ADP-ribose hydrolase of Streptococcus pyogenes serotype M6 (strain ATCC BAA-946 / MGAS10394).